Reading from the N-terminus, the 448-residue chain is Probable glycine dehydrogenase (decarboxylating) subunit 1 (448 aa).

Belongs to the GcvP family. N-terminal subunit subfamily. As to quaternary structure, the glycine cleavage system is composed of four proteins: P, T, L and H. In this organism, the P 'protein' is a heterodimer of two subunits.

The catalysed reaction is N(6)-[(R)-lipoyl]-L-lysyl-[glycine-cleavage complex H protein] + glycine + H(+) = N(6)-[(R)-S(8)-aminomethyldihydrolipoyl]-L-lysyl-[glycine-cleavage complex H protein] + CO2. Its function is as follows. The glycine cleavage system catalyzes the degradation of glycine. The P protein binds the alpha-amino group of glycine through its pyridoxal phosphate cofactor; CO(2) is released and the remaining methylamine moiety is then transferred to the lipoamide cofactor of the H protein. The protein is Probable glycine dehydrogenase (decarboxylating) subunit 1 of Staphylococcus aureus (strain Mu3 / ATCC 700698).